The sequence spans 352 residues: Uroporphyrinogen decarboxylase (352 aa).

Residues 26–30 (RQAGR), Asp76, Tyr153, Ser208, and His323 contribute to the substrate site.

It belongs to the uroporphyrinogen decarboxylase family. In terms of assembly, homodimer.

The protein resides in the cytoplasm. It carries out the reaction uroporphyrinogen III + 4 H(+) = coproporphyrinogen III + 4 CO2. It functions in the pathway porphyrin-containing compound metabolism; protoporphyrin-IX biosynthesis; coproporphyrinogen-III from 5-aminolevulinate: step 4/4. Functionally, catalyzes the decarboxylation of four acetate groups of uroporphyrinogen-III to yield coproporphyrinogen-III. This Prochlorococcus marinus (strain MIT 9303) protein is Uroporphyrinogen decarboxylase.